The sequence spans 365 residues: MSSAPPRSPTPRAPKMKKDESFLGKLGGTLARKKKTREVTDLQEEGKSAINSPMAPALVDIHPEDTQLEENEERTMIDPTSREDPKFKELVKVLLDWINDVLAEERIIVKQLEEDLYDGQVLQKLLEKLAHCKLNVAEVTQSEIGQKQKLQTVLEAVQDLLRPHGWPLRWNVDSIHGKNLVAILHLLVSLAMHFRAPIHLPEHVTVQVVVVRKREGLLHSSHISEELTTTTEIMMGRFERDAFDTLFDHAPDKLNLVKKSLITFVNKHLNKLNLEVTDLETQFADGVYLVLLLGLLEDYFVPLHNFYLTPDSFDQKVHNVAFAFELMLDGGLKKPKARPEDVVNLDLKSTLRVLYTLFTKYKDVE.

Positions 1–12 (MSSAPPRSPTPR) are enriched in pro residues. Positions 1 to 52 (MSSAPPRSPTPRAPKMKKDESFLGKLGGTLARKKKTREVTDLQEEGKSAINS) are disordered. The residue at position 8 (serine 8) is a Phosphoserine. Residues 37-47 (REVTDLQEEGK) show a composition bias toward basic and acidic residues. Calponin-homology (CH) domains follow at residues 88–195 (KELV…MHFR) and 255–362 (NLVK…TKYK).

It belongs to the parvin family. Interacts with ILK, ARHGEF6, PXN (via LD motifs), ACTN2 and actin. Interacts with DYSF. Phosphorylated by ILK. As to expression, expressed predominantly in heart and moderately in spleen, lung and skeletal muscle.

It is found in the cell junction. It localises to the focal adhesion. Its subcellular location is the cell membrane. The protein resides in the cytoplasm. The protein localises to the cytoskeleton. It is found in the cell projection. It localises to the lamellipodium. Its subcellular location is the myofibril. The protein resides in the sarcomere. The protein localises to the z line. Adapter protein that plays a role in integrin signaling via ILK and in activation of the GTPases CDC42 and RAC1 by guanine exchange factors, such as ARHGEF6. Is involved in the reorganization of the actin cytoskeleton and formation of lamellipodia. Plays a role in cell adhesion, cell spreading, establishment or maintenance of cell polarity, and cell migration. This is Beta-parvin (Parvb) from Mus musculus (Mouse).